Reading from the N-terminus, the 134-residue chain is Transcription antitermination protein NusB (134 aa).

The protein belongs to the NusB family.

Its function is as follows. Involved in transcription antitermination. Required for transcription of ribosomal RNA (rRNA) genes. Binds specifically to the boxA antiterminator sequence of the ribosomal RNA (rrn) operons. In Shewanella oneidensis (strain ATCC 700550 / JCM 31522 / CIP 106686 / LMG 19005 / NCIMB 14063 / MR-1), this protein is Transcription antitermination protein NusB.